Reading from the N-terminus, the 56-residue chain is MAVQKNKPTRSKRGMRRSHDALTTALLSVDKTSGENHLRHHITTDGYYRGRKVINR.

Residues 1 to 21 (MAVQKNKPTRSKRGMRRSHDA) are disordered. Over residues 7 to 16 (KPTRSKRGMR) the composition is skewed to basic residues.

It belongs to the bacterial ribosomal protein bL32 family.

In Hamiltonella defensa subsp. Acyrthosiphon pisum (strain 5AT), this protein is Large ribosomal subunit protein bL32.